A 206-amino-acid polypeptide reads, in one-letter code: MARYIGPKLKLSRREGTDLFLKSGVRAIDSKCKIDTVPGQHGARKARLSDYGVQLREKQKVRRIYGVLEKQFRNYYRDAARQKGNTGENLLQLLEGRLDNVVYRMGFGATRAESRQLVSHKAIMVNGRVVNIPSFQVSPEDVICVREKAKKQARIKASLEVAGQREKPTWVEVDAAKMEGAFKRLPERSDLSADINEQLIVELYSK.

The S4 RNA-binding domain occupies 96–156 (GRLDNVVYRM…EKAKKQARIK (61 aa)).

Belongs to the universal ribosomal protein uS4 family. Part of the 30S ribosomal subunit. Contacts protein S5. The interaction surface between S4 and S5 is involved in control of translational fidelity.

One of the primary rRNA binding proteins, it binds directly to 16S rRNA where it nucleates assembly of the body of the 30S subunit. In terms of biological role, with S5 and S12 plays an important role in translational accuracy. The chain is Small ribosomal subunit protein uS4 from Aeromonas hydrophila subsp. hydrophila (strain ATCC 7966 / DSM 30187 / BCRC 13018 / CCUG 14551 / JCM 1027 / KCTC 2358 / NCIMB 9240 / NCTC 8049).